Reading from the N-terminus, the 694-residue chain is Phosphatase and actin regulator 4-A (694 aa).

2 stretches are compositionally biased toward basic and acidic residues: residues 1–13 and 46–72; these read MEDR…DHSE and SSDS…ELIK. Disordered regions lie at residues 1-29, 42-169, 192-403, 426-445, and 450-572; these read MEDR…KSKF, RKRK…QPLP, VNEV…HIRI, LFMQ…RSLP, and LLKV…QIRQ. Residues 55–80 form an RPEL 1 repeat; it reads EVLERKISTRKPREELIKRGLLVEVP. Residues 240–267 are compositionally biased toward polar residues; it reads SISTSVTQESAVAGQKSDSSNRLQSSAP. The span at 300–317 shows a compositional bias: low complexity; sequence AELSLALAGSPLSPAGSR. 2 stretches are compositionally biased toward pro residues: residues 318–327 and 372–381; these read PSPPLPPKRA and SNPPVPPLTL. Acidic residues-rich tracts occupy residues 455–467, 499–511, and 519–529; these read DDED…DESL, QEEE…DTDS, and DDEEEEEEEET. 2 RPEL repeats span residues 576–601 and 613–638; these read TQLN…QKNE and RRLT…RFNE.

It belongs to the phosphatase and actin regulator family. In terms of assembly, binds ppp1ca and actin.

It is found in the cytoplasm. The protein localises to the cell projection. The protein resides in the lamellipodium. Its function is as follows. Regulator of protein phosphatase 1 (PP1) required for neural tube and optic fissure closure, and enteric neural crest cell (ENCCs) migration during development. Acts as an activator of PP1. During neural tube closure, localizes to the ventral neural tube and activates PP1, leading to down-regulate cell proliferation within cranial neural tissue and the neural retina. Also acts as a regulator of migration of enteric neural crest cells (ENCCs) by activating PP1, leading to repression of the integrin signaling through the rho/rock pathway. The sequence is that of Phosphatase and actin regulator 4-A (phactr4-a) from Xenopus laevis (African clawed frog).